We begin with the raw amino-acid sequence, 279 residues long: 3-methyl-2-oxobutanoate hydroxymethyltransferase (279 aa).

Mg(2+) is bound by residues D44 and D83. 3-methyl-2-oxobutanoate is bound by residues 44–45 (DS), D83, and K113. E115 is a binding site for Mg(2+). Catalysis depends on E182, which acts as the Proton acceptor.

Belongs to the PanB family. As to quaternary structure, homodecamer; pentamer of dimers. The cofactor is Mg(2+).

It is found in the cytoplasm. The enzyme catalyses 3-methyl-2-oxobutanoate + (6R)-5,10-methylene-5,6,7,8-tetrahydrofolate + H2O = 2-dehydropantoate + (6S)-5,6,7,8-tetrahydrofolate. Its pathway is cofactor biosynthesis; (R)-pantothenate biosynthesis; (R)-pantoate from 3-methyl-2-oxobutanoate: step 1/2. In terms of biological role, catalyzes the reversible reaction in which hydroxymethyl group from 5,10-methylenetetrahydrofolate is transferred onto alpha-ketoisovalerate to form ketopantoate. The polypeptide is 3-methyl-2-oxobutanoate hydroxymethyltransferase (Desulfotalea psychrophila (strain LSv54 / DSM 12343)).